A 448-amino-acid polypeptide reads, in one-letter code: tRNA modification GTPase MnmE (448 aa).

R24, E81, and K120 together coordinate (6S)-5-formyl-5,6,7,8-tetrahydrofolate. The region spanning 216–373 (GLNVVLVGAP…LKRTLLREAG (158 aa)) is the TrmE-type G domain. N226 serves as a coordination point for K(+). GTP is bound by residues 226–231 (NVGKSS), 245–251 (TDIAGTT), and 270–273 (DTAG). S230 lines the Mg(2+) pocket. T245, I247, and T250 together coordinate K(+). T251 is a Mg(2+) binding site. Residue K448 participates in (6S)-5-formyl-5,6,7,8-tetrahydrofolate binding.

Belongs to the TRAFAC class TrmE-Era-EngA-EngB-Septin-like GTPase superfamily. TrmE GTPase family. As to quaternary structure, homodimer. Heterotetramer of two MnmE and two MnmG subunits. The cofactor is K(+).

The protein resides in the cytoplasm. Exhibits a very high intrinsic GTPase hydrolysis rate. Involved in the addition of a carboxymethylaminomethyl (cmnm) group at the wobble position (U34) of certain tRNAs, forming tRNA-cmnm(5)s(2)U34. The chain is tRNA modification GTPase MnmE from Neisseria meningitidis serogroup A / serotype 4A (strain DSM 15465 / Z2491).